A 144-amino-acid chain; its full sequence is Superoxide dismutase [Mn] (144 aa).

Positions 1 to 22 are disordered; that stretch reads GYVNGLESAEETLAENRESGDF. H42, D124, and H128 together coordinate Mn(2+).

It belongs to the iron/manganese superoxide dismutase family. It depends on Mn(2+) as a cofactor.

The catalysed reaction is 2 superoxide + 2 H(+) = H2O2 + O2. Destroys superoxide anion radicals which are normally produced within the cells and which are toxic to biological systems. The polypeptide is Superoxide dismutase [Mn] (sod) (Haloarcula hispanica).